The chain runs to 403 residues: Probable tRNA sulfurtransferase (403 aa).

The 106-residue stretch at 60–165 (QLAEERLKPI…KEGVFLSCRT (106 aa)) folds into the THUMP domain. ATP is bound by residues 183-184 (ML), 208-209 (HF), Arg-265, Gly-287, and Gln-296.

Belongs to the ThiI family.

The protein resides in the cytoplasm. The enzyme catalyses [ThiI sulfur-carrier protein]-S-sulfanyl-L-cysteine + a uridine in tRNA + 2 reduced [2Fe-2S]-[ferredoxin] + ATP + H(+) = [ThiI sulfur-carrier protein]-L-cysteine + a 4-thiouridine in tRNA + 2 oxidized [2Fe-2S]-[ferredoxin] + AMP + diphosphate. It carries out the reaction [ThiS sulfur-carrier protein]-C-terminal Gly-Gly-AMP + S-sulfanyl-L-cysteinyl-[cysteine desulfurase] + AH2 = [ThiS sulfur-carrier protein]-C-terminal-Gly-aminoethanethioate + L-cysteinyl-[cysteine desulfurase] + A + AMP + 2 H(+). Its pathway is cofactor biosynthesis; thiamine diphosphate biosynthesis. Functionally, catalyzes the ATP-dependent transfer of a sulfur to tRNA to produce 4-thiouridine in position 8 of tRNAs, which functions as a near-UV photosensor. Also catalyzes the transfer of sulfur to the sulfur carrier protein ThiS, forming ThiS-thiocarboxylate. This is a step in the synthesis of thiazole, in the thiamine biosynthesis pathway. The sulfur is donated as persulfide by IscS. The protein is Probable tRNA sulfurtransferase of Listeria monocytogenes serovar 1/2a (strain ATCC BAA-679 / EGD-e).